A 444-amino-acid chain; its full sequence is Probable glycine dehydrogenase (decarboxylating) subunit 1 (444 aa).

It belongs to the GcvP family. N-terminal subunit subfamily. The glycine cleavage system is composed of four proteins: P, T, L and H. In this organism, the P 'protein' is a heterodimer of two subunits.

It catalyses the reaction N(6)-[(R)-lipoyl]-L-lysyl-[glycine-cleavage complex H protein] + glycine + H(+) = N(6)-[(R)-S(8)-aminomethyldihydrolipoyl]-L-lysyl-[glycine-cleavage complex H protein] + CO2. Its function is as follows. The glycine cleavage system catalyzes the degradation of glycine. The P protein binds the alpha-amino group of glycine through its pyridoxal phosphate cofactor; CO(2) is released and the remaining methylamine moiety is then transferred to the lipoamide cofactor of the H protein. The protein is Probable glycine dehydrogenase (decarboxylating) subunit 1 of Prosthecochloris aestuarii (strain DSM 271 / SK 413).